The chain runs to 87 residues: Small ribosomal subunit protein bS20 (87 aa).

The tract at residues M1 to S26 is disordered.

The protein belongs to the bacterial ribosomal protein bS20 family.

Functionally, binds directly to 16S ribosomal RNA. The sequence is that of Small ribosomal subunit protein bS20 from Nitrosomonas eutropha (strain DSM 101675 / C91 / Nm57).